The primary structure comprises 46 residues: Toxin Up-1 (46 aa).

It localises to the secreted. The protein resides in the nematocyst. Its subcellular location is the target cell membrane. Its function is as follows. This toxin is a potent hemolysin devoid of enzymatic activity. Its hemolytic activity is inhibited by sphingomyelin but not by cholesterol. In erythrocyte membranes, it causes numerous cell membrane ruptures. It also exerces cytotoxicity to different cell lines. It exerces a positive inotropic effect. Also causes hemorrhage and necrosis by dilation of the blood vessels in the skin, and vascular leakage of fluids and rupture of alveolar walls of the lungs. Is a potent ichtyotoxin. May act as a pore-forming toxin. This is Toxin Up-1 from Urticina piscivora (Fish-eating sea anemone).